The sequence spans 122 residues: MIQTETRLEVADNTGAREVMCIKVLGGSKRRYASIGDIIKVTVKEATPRGRVKKGEIYNAVVVRTAKGVRRQDGSLIKFDGNAAVLLNAKLEPIGTRIFGPVTRELRSERFMKIVSLAPEVL.

The protein belongs to the universal ribosomal protein uL14 family. As to quaternary structure, part of the 50S ribosomal subunit. Forms a cluster with proteins L3 and L19. In the 70S ribosome, L14 and L19 interact and together make contacts with the 16S rRNA in bridges B5 and B8.

Functionally, binds to 23S rRNA. Forms part of two intersubunit bridges in the 70S ribosome. The polypeptide is Large ribosomal subunit protein uL14 (Paraburkholderia phytofirmans (strain DSM 17436 / LMG 22146 / PsJN) (Burkholderia phytofirmans)).